The chain runs to 283 residues: MTVQTSKNPQVDIAEDNAFFPSEYSLSQYTSPVSDLDGVDYPKPYRGKHKILVIAADERYLPTDNGKLFSTGNHPIETLLPLYHLHAAGFEFEVATISGLMTKFEYWAMPHKDEKVMPFFEQHKSLFRNPKKLADVVASLNADSEYAAIFVPGGHGALIGLPESQDVAAALQWAIKNDRFVISLCHGPAAFLALRHGDNPLNGYSICAFPDAADKQTPEIGYMPGHLTWYFGEELKKMGMNIINDDIAGRVHKDRKVLTGDSPFAANALGKLAAQEMLAAYAG.

Zn(2+) contacts are provided by H86, E91, and H123. Catalysis depends on C185, which acts as the Nucleophile.

It belongs to the peptidase C56 family. HchA subfamily. Homodimer.

It localises to the cytoplasm. It catalyses the reaction N(omega)-(1-hydroxy-2-oxopropyl)-L-arginyl-[protein] + H2O = lactate + L-arginyl-[protein] + H(+). The catalysed reaction is N(6)-(1-hydroxy-2-oxopropyl)-L-lysyl-[protein] + H2O = lactate + L-lysyl-[protein] + H(+). The enzyme catalyses S-(1-hydroxy-2-oxopropyl)-L-cysteinyl-[protein] + H2O = lactate + L-cysteinyl-[protein] + H(+). It carries out the reaction N(omega)-(1-hydroxy-2-oxoethyl)-L-arginyl-[protein] + H2O = L-arginyl-[protein] + glycolate + H(+). It catalyses the reaction N(6)-(1-hydroxy-2-oxoethyl)-L-lysyl-[protein] + H2O = glycolate + L-lysyl-[protein] + H(+). The catalysed reaction is S-(1-hydroxy-2-oxoethyl)-L-cysteinyl-[protein] + H2O = glycolate + L-cysteinyl-[protein] + H(+). The enzyme catalyses N(2)-(1-hydroxy-2-oxopropyl)-dGTP + H2O = lactate + dGTP + H(+). It carries out the reaction N(2)-(1-hydroxy-2-oxopropyl)-GTP + H2O = lactate + GTP + H(+). It catalyses the reaction N(2)-(1-hydroxy-2-oxopropyl)-GDP + H2O = lactate + GDP + H(+). The catalysed reaction is N(2)-(1-hydroxy-2-oxopropyl)-GMP + H2O = lactate + GMP + H(+). The enzyme catalyses N(2)-(1-hydroxy-2-oxoethyl)-dGTP + H2O = dGTP + glycolate + H(+). It carries out the reaction N(2)-(1-hydroxy-2-oxoethyl)-GTP + H2O = glycolate + GTP + H(+). It catalyses the reaction N(2)-(1-hydroxy-2-oxoethyl)-GDP + H2O = glycolate + GDP + H(+). The catalysed reaction is N(2)-(1-hydroxy-2-oxoethyl)-GMP + H2O = glycolate + GMP + H(+). The enzyme catalyses an N(2)-(1-hydroxy-2-oxopropyl)-guanosine in RNA + H2O = a guanosine in RNA + lactate + H(+). It carries out the reaction an N(2)-(1-hydroxy-2-oxopropyl)-2'-deoxyguanosine in DNA + H2O = a 2'-deoxyguanosine in DNA + lactate + H(+). It catalyses the reaction an N(2)-(1-hydroxy-2-oxoethyl)-guanosine in RNA + H2O = a guanosine in RNA + glycolate + H(+). The catalysed reaction is an N(2)-(1-hydroxy-2-oxoethyl)-2'-deoxyguanosine in DNA + H2O = a 2'-deoxyguanosine in DNA + glycolate + H(+). Functionally, protein and nucleotide deglycase that catalyzes the deglycation of the Maillard adducts formed between amino groups of proteins or nucleotides and reactive carbonyl groups of glyoxals. Thus, functions as a protein deglycase that repairs methylglyoxal- and glyoxal-glycated proteins, and releases repaired proteins and lactate or glycolate, respectively. Deglycates cysteine, arginine and lysine residues in proteins, and thus reactivates these proteins by reversing glycation by glyoxals. Acts on early glycation intermediates (hemithioacetals and aminocarbinols), preventing the formation of Schiff bases and advanced glycation endproducts (AGE). Also functions as a nucleotide deglycase able to repair glycated guanine in the free nucleotide pool (GTP, GDP, GMP, dGTP) and in DNA and RNA. Is thus involved in a major nucleotide repair system named guanine glycation repair (GG repair), dedicated to reversing methylglyoxal and glyoxal damage via nucleotide sanitization and direct nucleic acid repair. Plays an important role in protecting cells from carbonyl stress. This Escherichia coli O139:H28 (strain E24377A / ETEC) protein is Protein/nucleic acid deglycase HchA.